Here is a 315-residue protein sequence, read N- to C-terminus: Zinc finger protein 691 (315 aa).

Residues 1-10 show a composition bias toward polar residues; sequence MSLCSPTHSA. The segment at 1-90 is disordered; the sequence is MSLCSPTHSA…QETHPKKPWQ (90 aa). Basic and acidic residues predominate over residues 33 to 58; that stretch reads GSEKEQSPEPHLPEEGEGGKPWRVDD. 3 positions are modified to phosphoserine: Ser-39, Ser-75, and Ser-77. Lys-113 participates in a covalent cross-link: Glycyl lysine isopeptide (Lys-Gly) (interchain with G-Cter in SUMO2). C2H2-type zinc fingers lie at residues 115–137, 143–165, 171–193, 199–221, 227–249, 255–277, and 283–305; these read FICA…QRIH, YKCS…ERIH, YKCP…QQDH, YRCD…HRTH, YICC…HRTH, YECT…QRTH, and YRCT…QKTH.

This sequence belongs to the krueppel C2H2-type zinc-finger protein family.

It is found in the nucleus. In terms of biological role, may be involved in transcriptional regulation. This is Zinc finger protein 691 (ZNF691) from Homo sapiens (Human).